The sequence spans 98 residues: Large ribosomal subunit protein bL25 (98 aa).

The protein belongs to the bacterial ribosomal protein bL25 family. Part of the 50S ribosomal subunit; part of the 5S rRNA/L5/L18/L25 subcomplex. Contacts the 5S rRNA. Binds to the 5S rRNA independently of L5 and L18.

Functionally, this is one of the proteins that binds to the 5S RNA in the ribosome where it forms part of the central protuberance. The polypeptide is Large ribosomal subunit protein bL25 (Synechocystis sp. (strain ATCC 27184 / PCC 6803 / Kazusa)).